A 445-amino-acid polypeptide reads, in one-letter code: Glutamate--tRNA ligase 1 (445 aa).

The 'HIGH' region motif lies at Pro-9 to Asn-19. The 'KMSKS' region motif lies at Lys-238–Arg-242. Residue Lys-241 participates in ATP binding.

It belongs to the class-I aminoacyl-tRNA synthetase family. Glutamate--tRNA ligase type 1 subfamily. As to quaternary structure, monomer.

It localises to the cytoplasm. The catalysed reaction is tRNA(Glu) + L-glutamate + ATP = L-glutamyl-tRNA(Glu) + AMP + diphosphate. Catalyzes the attachment of glutamate to tRNA(Glu) in a two-step reaction: glutamate is first activated by ATP to form Glu-AMP and then transferred to the acceptor end of tRNA(Glu). The polypeptide is Glutamate--tRNA ligase 1 (Ehrlichia ruminantium (strain Gardel)).